The sequence spans 931 residues: Probable UDP-N-acetylglucosamine--peptide N-acetylglucosaminyltransferase SPINDLY (931 aa).

Residues 1–15 are compositionally biased toward basic and acidic residues; it reads MAWTEKDVENGKESE. The segment at 1-38 is disordered; sequence MAWTEKDVENGKESESLGNNGFLKGGQSSSGSKGSPGR. A compositionally biased stretch (low complexity) spans 25–37; that stretch reads GGQSSSGSKGSPG. TPR repeat units lie at residues 48–81, 82–115, 116–149, 157–190, 191–224, 225–258, 266–299, 300–333, 334–367, 369–401, and 402–435; these read DKDAITYANILRSRNKFVDALAIYESVLEKDSKS, IESLIGKGICLQMQNTGRLAFESFSEAIKVDPQN, ACALTHCGILYKDEGRLVEAAESYEKALKADPSY, AIVLTDIGTSLKLAGNTQEGIQKYYEAIKIDSHY, APAYYNLGVVYSEMMQYDMALNCYEKAALERPMY, AEAYCNMGVIFKNRGDLESAIACYERCLAVSPNF, AIALTDLGTKVKLEGDINQGVAYYKKALCYNWHY, ADAMYNLGVAYGEMLKFDMAIVFYELAFHFNPHC, AEACNNLGVIYKDRDNLDKAVECYQLALSIKPNF, QSLNNLGVVYTVQGKMDAAASMIEKAIIANPTY, and AEAYNNLGVLYRDAGNISLAIEAYEQCLKIDPDS. Residues 436–931 form a catalytic region region; it reads RNAGQNRLLA…NHNGNHGNLS (496 aa). Positions 864–884 are enriched in low complexity; sequence QQQQTQTESVVPEESSVNPSE. Residues 864-931 are disordered; sequence QQQQTQTESV…NHNGNHGNLS (68 aa). A compositionally biased stretch (polar residues) spans 910–931; it reads KSSTSEENGVQSNHNGNHGNLS.

The protein belongs to the glycosyltransferase 41 family. O-GlcNAc transferase subfamily.

The protein resides in the nucleus. It catalyses the reaction L-seryl-[protein] + UDP-N-acetyl-alpha-D-glucosamine = 3-O-(N-acetyl-beta-D-glucosaminyl)-L-seryl-[protein] + UDP + H(+). It carries out the reaction L-threonyl-[protein] + UDP-N-acetyl-alpha-D-glucosamine = 3-O-(N-acetyl-beta-D-glucosaminyl)-L-threonyl-[protein] + UDP + H(+). It participates in protein modification; protein glycosylation. Probable O-linked N-acetylglucosamine transferase (OGT) involved in various processes such as gibberellin (GA) signaling pathway. OGTs catalyze the addition of nucleotide-activated sugars directly onto the polypeptide through O-glycosidic linkage with the hydroxyl of serine or threonine. Probably acts by adding O-linked sugars to yet unknown proteins. This is Probable UDP-N-acetylglucosamine--peptide N-acetylglucosaminyltransferase SPINDLY (SPY) from Solanum lycopersicum (Tomato).